Here is a 42-residue protein sequence, read N- to C-terminus: Pollen allergen Sal k 1 (42 aa).

In Kali turgidum (Prickly saltwort), this protein is Pollen allergen Sal k 1.